The chain runs to 186 residues: ATP synthase subunit delta (186 aa).

The protein belongs to the ATPase delta chain family. In terms of assembly, F-type ATPases have 2 components, F(1) - the catalytic core - and F(0) - the membrane proton channel. F(1) has five subunits: alpha(3), beta(3), gamma(1), delta(1), epsilon(1). F(0) has three main subunits: a(1), b(2) and c(10-14). The alpha and beta chains form an alternating ring which encloses part of the gamma chain. F(1) is attached to F(0) by a central stalk formed by the gamma and epsilon chains, while a peripheral stalk is formed by the delta and b chains.

Its subcellular location is the cell inner membrane. Its function is as follows. F(1)F(0) ATP synthase produces ATP from ADP in the presence of a proton or sodium gradient. F-type ATPases consist of two structural domains, F(1) containing the extramembraneous catalytic core and F(0) containing the membrane proton channel, linked together by a central stalk and a peripheral stalk. During catalysis, ATP synthesis in the catalytic domain of F(1) is coupled via a rotary mechanism of the central stalk subunits to proton translocation. This protein is part of the stalk that links CF(0) to CF(1). It either transmits conformational changes from CF(0) to CF(1) or is implicated in proton conduction. In Brucella abortus (strain S19), this protein is ATP synthase subunit delta.